Here is a 122-residue protein sequence, read N- to C-terminus: NADPH-dependent 7-cyano-7-deazaguanine reductase (122 aa).

Catalysis depends on C34, which acts as the Thioimide intermediate. The active-site Proton donor is D41. Substrate contacts are provided by residues 56 to 58 (VEL) and 75 to 76 (HE).

Belongs to the GTP cyclohydrolase I family. QueF type 1 subfamily.

It is found in the cytoplasm. It carries out the reaction 7-aminomethyl-7-carbaguanine + 2 NADP(+) = 7-cyano-7-deazaguanine + 2 NADPH + 3 H(+). The protein operates within tRNA modification; tRNA-queuosine biosynthesis. Functionally, catalyzes the NADPH-dependent reduction of 7-cyano-7-deazaguanine (preQ0) to 7-aminomethyl-7-deazaguanine (preQ1). The polypeptide is NADPH-dependent 7-cyano-7-deazaguanine reductase (Anaeromyxobacter dehalogenans (strain 2CP-1 / ATCC BAA-258)).